The chain runs to 584 residues: Poly(A) RNA polymerase protein 2 (584 aa).

The segment covering 1–11 (MGAKSVTASSS) has biased composition (polar residues). Disordered regions lie at residues 1–63 (MGAK…LPKD) and 81–147 (EGFD…QELE). The segment covering 12-35 (KKIKNRHNGKVKKSKKIKKVRKPQ) has biased composition (basic residues). Residues 53 to 63 (NEQETNKLPKD) are compositionally biased toward basic and acidic residues. The segment covering 130-139 (SEDEQAEQEE) has biased composition (acidic residues). Mg(2+) is bound by residues aspartate 236 and aspartate 238. The ATP site is built by glycine 301, lysine 326, asparagine 431, and arginine 435. Residues 371 to 431 (NLGVLLIEFF…AIQDPGDESN (61 aa)) enclose the PAP-associated domain. Residues 525 to 584 (TSTATATTTDDDYEITNPPAKKAKIEEKPESEPAKRNSGETYITVSSEDDDEDGYNPYTL) form a disordered region. Residues 547–562 (AKIEEKPESEPAKRNS) are compositionally biased toward basic and acidic residues.

Belongs to the DNA polymerase type-B-like family. In terms of assembly, component of the TRAMP complex (also called TRF4 complex) composed of at least HUL4, MTR4, PAP2/TRF4 and either AIR1 or AIR2. Interacts with NOP53 and POL2. Interacts directly with AIR2. Mg(2+) serves as cofactor. Mn(2+) is required as a cofactor.

The protein localises to the nucleus. The catalysed reaction is RNA(n) + ATP = RNA(n)-3'-adenine ribonucleotide + diphosphate. Its function is as follows. Catalytic subunit of the TRAMP complex which has a poly(A) RNA polymerase activity and is involved in a post-transcriptional quality control mechanism limiting inappropriate expression of genetic information. Polyadenylation is required for the degradative activity of the exosome on several of its nuclear RNA substrates like cryptic transcripts generated by RNA polymerase II and III, or hypomethylated pre-tRNAi-Met. Polyadenylates RNA processing and degradation intermediates of snRNAs, snoRNAs and mRNAs that accumulate in strains lacking a functional exosome. TRF4 is also required for proper nuclear division in mitosis, DNA damage repair and sister chromatid cohesion. Involved in the regulation of histone mRNA levels. May mediate mitotic chromosome condensation. The protein is Poly(A) RNA polymerase protein 2 (PAP2) of Saccharomyces cerevisiae (strain ATCC 204508 / S288c) (Baker's yeast).